The primary structure comprises 600 residues: Pyranose dehydrogenase 2 (600 aa).

Positions 1-25 are cleaved as a signal peptide; the sequence is MLSRVAKLNSRLVSLALLGSQIAFG. N-linked (GlcNAc...) asparagine glycosylation is found at N99 and N114. At H127 the chain carries Tele-8alpha-FAD histidine. Residues N199, N275, and N342 are each glycosylated (N-linked (GlcNAc...) asparagine). The active-site Proton acceptor is the H535. H579 is an active-site residue.

It belongs to the GMC oxidoreductase family. In terms of assembly, monomer. Requires FAD as cofactor. In terms of processing, N-glycosylated.

The protein localises to the secreted. It catalyses the reaction pyranose + acceptor = pyranos-2-ulose + reduced acceptor.. The enzyme catalyses pyranose + acceptor = pyranos-3-ulose + reduced acceptor.. The catalysed reaction is pyranose + acceptor = pyranos-2,3-diulose + reduced acceptor.. It carries out the reaction a pyranoside + acceptor = a pyranosid-3-ulose + reduced acceptor.. It catalyses the reaction a pyranoside + acceptor = a pyranosid-3,4-diulose + reduced acceptor.. In terms of biological role, catalyzes the single-oxidation or sequential double oxidation reaction of carbohydrates primarily at carbon-2 and/or carbon-3 with the concomitant reduction of the flavin. The enzyme exhibits a broad sugar substrate specificity, oxidizing different aldopyranoses to the corresponding C-1, C-2, C-3 or C-1,2, C-2,3 and C-3,4 (di)dehydro sugars with substrate-specific regioselectivity. Accepts only a narrow range of electron acceptors such as substituted benzoquinones and complexed metal ions and reacts extremely slowly with O(2) as acceptor. May play a role in the natural recycling of plant matter by oxidizing all major monosaccharides in lignocellulose and by reducing quinone compounds or reactive radical species generated during lignin depolymerization. This chain is Pyranose dehydrogenase 2, found in Leucoagaricus meleagris (Western flat-topped agaric).